The chain runs to 284 residues: Methylglyoxal reductase YeaE (284 aa).

This sequence belongs to the aldo/keto reductase family.

It carries out the reaction hydroxyacetone + NADP(+) = methylglyoxal + NADPH + H(+). It catalyses the reaction a primary alcohol + NADP(+) = an aldehyde + NADPH + H(+). Aldo-keto reductase that contributes to cellular methylglyoxal detoxification by catalyzing the NADPH-dependent conversion of methylglyoxal to acetol. It also exhibits activity with glyoxal and probably plays a significant role in detoxification of glyoxal in vivo. Can also use aromatic aldehydes such as 4-nitrobenzaldehyde, 3-nitrobenzaldehyde and benzaldehyde, and phenylglyoxal. The polypeptide is Methylglyoxal reductase YeaE (yeaE) (Escherichia coli (strain K12)).